Reading from the N-terminus, the 266-residue chain is Probable septum site-determining protein MinC (266 aa).

The disordered stretch occupies residues 98-146 (ILKGGRPVSDVDVPKVEPESPPAEEKKKTGKATKASGKSDEIGETDSPQ). The segment covering 109 to 124 (DVPKVEPESPPAEEKK) has biased composition (basic and acidic residues).

Belongs to the MinC family. Interacts with MinD and FtsZ.

In terms of biological role, cell division inhibitor that blocks the formation of polar Z ring septums. Rapidly oscillates between the poles of the cell to destabilize FtsZ filaments that have formed before they mature into polar Z rings. Prevents FtsZ polymerization. This is Probable septum site-determining protein MinC from Allorhizobium ampelinum (strain ATCC BAA-846 / DSM 112012 / S4) (Agrobacterium vitis (strain S4)).